Here is a 194-residue protein sequence, read N- to C-terminus: Mitochondrial inner membrane protease ATP23 (194 aa).

The interval 1 to 20 is disordered; that stretch reads MEDAAAPNSGSEFNPGARRG. Position 96 (His-96) interacts with Zn(2+). Glu-97 is an active-site residue. His-100 contacts Zn(2+).

Belongs to the peptidase M76 family.

Its subcellular location is the mitochondrion inner membrane. Its function is as follows. Has a dual role in the assembly of mitochondrial ATPase. Acts as a protease that removes the N-terminal 10 residues of mitochondrial ATPase CF(0) subunit 6 (ATP6) at the intermembrane space side. Also involved in the correct assembly of the membrane-embedded ATPase CF(0) particle, probably mediating association of ATP6 with the subunit 9 ring. In Arabidopsis thaliana (Mouse-ear cress), this protein is Mitochondrial inner membrane protease ATP23.